The chain runs to 417 residues: Nucleosome assembly protein (417 aa).

Residues 1 to 47 (MSDPIRTKPKSSMQIDNAPTPHNTPASVLNPSYLKNGNPVRAQAQEQ) form a disordered region. Residues 10–35 (KSSMQIDNAPTPHNTPASVLNPSYLK) show a composition bias toward polar residues. 2 positions are modified to phosphothreonine: threonine 20 and threonine 24. Serine 27 carries the phosphoserine modification. Lysine 50 participates in a covalent cross-link: Glycyl lysine isopeptide (Lys-Gly) (interchain with G-Cter in ubiquitin). Phosphothreonine is present on threonine 53. A phosphoserine mark is found at serine 69, serine 76, serine 82, serine 98, serine 104, and serine 140. The segment at 143–362 (EQPKPEQIAK…IPRAVDWFTG (220 aa)) is interaction with NBA1. Residues serine 159 and serine 177 each carry the phosphoserine; by CK2 modification. The H-T-H motif DNA-binding region spans 330 to 356 (LEEDLEERLALDYSIGEQLKDKLIPRA). Positions 364-417 (ALEFEFEEDEEEADEDEDEEEDDDHGLEDDDGESAEEQDDFAGRPEQAPECKQS) are disordered. Acidic residues predominate over residues 367 to 403 (FEFEEDEEEADEDEDEEEDDDHGLEDDDGESAEEQDD). Phosphoserine; by CK2 is present on serine 397. Positions 404–417 (FAGRPEQAPECKQS) are enriched in basic and acidic residues.

This sequence belongs to the nucleosome assembly protein (NAP) family. Component of the GIN4 complex composed of at least BNI5, CDC3, CDC10, CDC11, CDC12, GIN4, NAP1 and SHS1 which forms a ring at the bud neck. Homodimer (in-vitro). Interacts with the B-type cyclin CLB2. Interacts with 60S ribosomal protein L18 (RPL18A or RPL18B), CKA2, CKI1, eukaryotic elongation factor 1 complex eEF1A (TEF1 or TEF2), FOL1, HSC82, HTA2, HTB2, HTZ1, KAP114, KCC4, NIS1, SSA1, SSA2, SSB1, SSC1, SHM1, SIP5 and TCO89. Interacts with NBA1. Interacts with histone H3/H4 heterodimers. Phosphorylation by CK2 is required for normal progression through S phase. CK2 phosphorylation is not required for correct bud formation nor histone binding.

The protein localises to the cytoplasm. It localises to the nucleus. Its subcellular location is the bud neck. Acidic protein, which assembles histones into an octamer (in vitro). Involved in the regulation of the localization and the function of the septins during mitosis. Involved in the function of B-type cyclins. The sequence is that of Nucleosome assembly protein from Saccharomyces cerevisiae (strain ATCC 204508 / S288c) (Baker's yeast).